The sequence spans 134 residues: Fluoride-specific ion channel FluC (134 aa).

4 consecutive transmembrane segments (helical) span residues 7 to 27, 38 to 58, 69 to 89, and 110 to 130; these read LAVA…TIMA, GTLL…IVLV, LFLF…AAES, and VGSL…LLGH. The Na(+) site is built by G77 and T80.

The protein belongs to the fluoride channel Fluc/FEX (TC 1.A.43) family.

The protein localises to the cell inner membrane. The enzyme catalyses fluoride(in) = fluoride(out). With respect to regulation, na(+) is not transported, but it plays an essential structural role and its presence is essential for fluoride channel function. Functionally, fluoride-specific ion channel. Important for reducing fluoride concentration in the cell, thus reducing its toxicity. The protein is Fluoride-specific ion channel FluC of Legionella pneumophila subsp. pneumophila (strain Philadelphia 1 / ATCC 33152 / DSM 7513).